The chain runs to 359 residues: Archaemetzincin-2 (359 aa).

Histidine 254 contributes to the Zn(2+) binding site. The active-site Proton acceptor is glutamate 255. Histidine 258, histidine 264, cysteine 265, cysteine 270, cysteine 289, and cysteine 292 together coordinate Zn(2+).

This sequence belongs to the peptidase M54 family. The cofactor is Zn(2+). As to expression, predominantly expressed in testis.

Functionally, probable zinc metalloprotease. In Mus musculus (Mouse), this protein is Archaemetzincin-2 (Amz2).